The primary structure comprises 187 residues: Adenine phosphoribosyltransferase 1 (187 aa).

The residue at position 68 (Ser-68) is a Phosphoserine. 133 to 137 lines the AMP pocket; sequence ATGGS.

It belongs to the purine/pyrimidine phosphoribosyltransferase family. As to quaternary structure, homodimer. Requires Mg(2+) as cofactor.

The protein localises to the cytoplasm. It localises to the nucleus. The catalysed reaction is AMP + diphosphate = 5-phospho-alpha-D-ribose 1-diphosphate + adenine. It participates in purine metabolism; AMP biosynthesis via salvage pathway; AMP from adenine: step 1/1. Functionally, catalyzes a salvage reaction resulting in the formation of AMP, that is energically less costly than de novo synthesis. The sequence is that of Adenine phosphoribosyltransferase 1 from Saccharomyces cerevisiae (strain ATCC 204508 / S288c) (Baker's yeast).